Here is a 400-residue protein sequence, read N- to C-terminus: Argininosuccinate synthase (400 aa).

8 to 16 provides a ligand contact to ATP; that stretch reads AYSGGLDTS. Residues tyrosine 87 and serine 92 each coordinate L-citrulline. ATP is bound at residue glycine 117. Residues threonine 119, asparagine 123, and aspartate 124 each contribute to the L-aspartate site. Position 123 (asparagine 123) interacts with L-citrulline. Positions 127, 175, 259, and 271 each coordinate L-citrulline.

Belongs to the argininosuccinate synthase family. Type 1 subfamily. In terms of assembly, homotetramer.

The protein resides in the cytoplasm. It carries out the reaction L-citrulline + L-aspartate + ATP = 2-(N(omega)-L-arginino)succinate + AMP + diphosphate + H(+). It participates in amino-acid biosynthesis; L-arginine biosynthesis; L-arginine from L-ornithine and carbamoyl phosphate: step 2/3. The polypeptide is Argininosuccinate synthase (Parafrankia sp. (strain EAN1pec)).